A 602-amino-acid polypeptide reads, in one-letter code: DNA damage-binding protein CMR1 (602 aa).

The segment at 35 to 85 is disordered; it reads KEVDNKSFSSPSSQKRRKTTKKPVIKKEISEPSRRSRRIAGIKSELEDPKQ. Residues 48-58 are compositionally biased toward basic residues; it reads QKRRKTTKKPV. The span at 59 to 68 shows a compositional bias: basic and acidic residues; it reads IKKEISEPSR. 6 WD repeats span residues 229 to 270, 291 to 328, 390 to 430, 446 to 484, 526 to 569, and 571 to 602; these read ICHN…NDTK, RNVS…STEL, LHDK…KSVY, NSRL…KLDN, GRWV…LAHL, and EQVG…YLFE.

The protein belongs to the WD repeat DDB2/WDR76 family.

Functionally, DNA-binding protein that binds to both single- and double-stranded DNA. Binds preferentially to UV-damaged DNA. May be involved in DNA-metabolic processes. The protein is DNA damage-binding protein CMR1 of Candida albicans (strain SC5314 / ATCC MYA-2876) (Yeast).